A 278-amino-acid polypeptide reads, in one-letter code: Myb/SANT-like DNA-binding domain-containing protein 1 (278 aa).

The interval 1–27 (MVRGAGPGPSLSALSHPTGASGMAAAE) is disordered. A Myb-like domain is found at 44–129 (RNWTDAEMRG…PDWPYYLAID (86 aa)). Residues 138 to 168 (SCDGKLPDSQPPGPSTSQTEASLSPPAKSTP) are disordered.

The protein is Myb/SANT-like DNA-binding domain-containing protein 1 (MSANTD1) of Homo sapiens (Human).